Here is an 863-residue protein sequence, read N- to C-terminus: Protein ARG5,6, mitochondrial (863 aa).

A mitochondrion-targeting transit peptide spans 1–65 (MPSASLLVST…RYVSSTNGFS (65 aa)). Positions 353–505 (KLVKRSSIGE…NFVKSCDTAS (153 aa)) constitute an N-acetyltransferase domain. S359 bears the Phosphoserine mark. The active site involves C675.

In the N-terminal section; belongs to the acetylglutamate kinase family. This sequence in the C-terminal section; belongs to the NAGSA dehydrogenase family. In terms of processing, the protein precursor is cleaved into the two biologically active enzymes, the kinase and the reductase.

The protein localises to the mitochondrion. The catalysed reaction is N-acetyl-L-glutamate 5-semialdehyde + phosphate + NADP(+) = N-acetyl-L-glutamyl 5-phosphate + NADPH + H(+). It carries out the reaction N-acetyl-L-glutamate + ATP = N-acetyl-L-glutamyl 5-phosphate + ADP. Its pathway is amino-acid biosynthesis; L-arginine biosynthesis; N(2)-acetyl-L-ornithine from L-glutamate: step 2/4. The protein operates within amino-acid biosynthesis; L-arginine biosynthesis; N(2)-acetyl-L-ornithine from L-glutamate: step 3/4. Its activity is regulated as follows. The kinase activity is inhibited by arginine. This Saccharomyces cerevisiae (strain ATCC 204508 / S288c) (Baker's yeast) protein is Protein ARG5,6, mitochondrial (ARG5,6).